Consider the following 319-residue polypeptide: Glycine--tRNA ligase alpha subunit (319 aa).

The interval Arg-290–Gly-319 is disordered. A compositionally biased stretch (basic and acidic residues) spans Gly-307 to Gly-319.

It belongs to the class-II aminoacyl-tRNA synthetase family. As to quaternary structure, tetramer of two alpha and two beta subunits.

The protein localises to the cytoplasm. It catalyses the reaction tRNA(Gly) + glycine + ATP = glycyl-tRNA(Gly) + AMP + diphosphate. The chain is Glycine--tRNA ligase alpha subunit from Moorella thermoacetica (strain ATCC 39073 / JCM 9320).